Here is a 313-residue protein sequence, read N- to C-terminus: tRNA dimethylallyltransferase 2 (313 aa).

16-23 (GPTASGKT) is an ATP binding site. 18–23 (TASGKT) is a binding site for substrate. Interaction with substrate tRNA regions lie at residues 41-44 (DSRQ) and 161-165 (QRTIR).

The protein belongs to the IPP transferase family. In terms of assembly, monomer. The cofactor is Mg(2+).

The catalysed reaction is adenosine(37) in tRNA + dimethylallyl diphosphate = N(6)-dimethylallyladenosine(37) in tRNA + diphosphate. Catalyzes the transfer of a dimethylallyl group onto the adenine at position 37 in tRNAs that read codons beginning with uridine, leading to the formation of N6-(dimethylallyl)adenosine (i(6)A). The polypeptide is tRNA dimethylallyltransferase 2 (Pelobacter propionicus (strain DSM 2379 / NBRC 103807 / OttBd1)).